The sequence spans 322 residues: CPX chromosomal region candidate gene 1 protein homolog (322 aa).

Polar residues-rich tracts occupy residues 1–23 (MTSS…NETP) and 37–78 (TNIS…TQND). Residues 1–83 (MTSSNQGNDP…MTQNDPPDEE (83 aa)) are disordered.

The protein is CPX chromosomal region candidate gene 1 protein homolog (Cpxcr1) of Mus musculus (Mouse).